The chain runs to 143 residues: MSTLSSEARVVGIDVGTKRVGVAVADPLRLFAQPHGTYAPDEALDVLQALRDADGIARIVVGWPLTEEGTAEEATEMVEAYVERIREALGTVEVAREDERYTSEIAKDLLREAGVSQPGRYDKGRVDAAAAAVILQGFLNRTG.

The protein belongs to the YqgF nuclease family.

The protein resides in the cytoplasm. Functionally, could be a nuclease involved in processing of the 5'-end of pre-16S rRNA. In Salinibacter ruber (strain DSM 13855 / M31), this protein is Putative pre-16S rRNA nuclease.